Reading from the N-terminus, the 303-residue chain is Probable cell division protein WhiA (303 aa).

A DNA-binding region (H-T-H motif) is located at residues 272–303 (SIQQVADALEFPITKSGVNHRLRKINKIADDL).

The protein belongs to the WhiA family.

Involved in cell division and chromosome segregation. The sequence is that of Probable cell division protein WhiA from Streptococcus pyogenes serotype M3 (strain ATCC BAA-595 / MGAS315).